The sequence spans 463 residues: Argininosuccinate lyase (463 aa).

It belongs to the lyase 1 family. Argininosuccinate lyase subfamily.

The protein resides in the cytoplasm. It catalyses the reaction 2-(N(omega)-L-arginino)succinate = fumarate + L-arginine. It participates in amino-acid biosynthesis; L-arginine biosynthesis; L-arginine from L-ornithine and carbamoyl phosphate: step 3/3. This chain is Argininosuccinate lyase, found in Thiobacillus denitrificans (strain ATCC 25259 / T1).